The sequence spans 166 residues: Short form salivary protein D7R1 (166 aa).

Positions 1-21 are cleaved as a signal peptide; sequence MFRKVFSVALVTCGLLVIVQA.

Belongs to the PBP/GOBP family. Interacts with host coagulation factor XII (F12) (inactive and activated) (via amino acids 1-77). Interacts with host high molecular weight kininogen (KNG1) (via amino acids 402-532). In terms of tissue distribution, female salivary gland (at protein level).

The protein resides in the secreted. With respect to regulation, zn(2+) modulates binding to host coagulation factor XII (F12) and high molecular weight kininogen (KNG1). Its function is as follows. Salivary protein with anticoagulant activity that targets the intrinsic blood coagulation pathway in the host. Inhibits activation of the host plasma contact system by preventing the reciprocal activation of host coagulation factor XII (F12) and prekallikrein (KLKB1). Attenuates generation of bradykinin in host plasma. May bind and sequester different mediators involved in the host response, such as serotonin and histamine. The sequence is that of Short form salivary protein D7R1 from Anopheles stephensi (Indo-Pakistan malaria mosquito).